The sequence spans 330 residues: MGTFTLHQGQTNLIKSFFRNYYLNAELELPKDMELREFALQPFGSDTYVRHLSFSSSEELRDYLVNRNLPLHLFYSSARYQLPSARNMEEKAWMGSDLLFDIDADHLCKLRSIRFCPVCGNAVVSEKCERDNVETLEYVEMTSECIKRGLEQTRNLVEILEDDFGLKPKVYFSGNRGFHVQVDCYGNCALLDSDERKEIAEYVMGIGVPGYPGGSENAPGWVGRKNRGINGVTIDEQVTIDVKRLIRIPNSLHGKSGLIVKRVPNLDDFEFNETLSPFTGYTIFLPYITIETEVLGSIIKLNRGIPIKIKSSIGIYLHLRNLGEVKAYVR.

Active-site residues include aspartate 101 and aspartate 103. Residues cysteine 116, cysteine 119, cysteine 128, and aspartate 131 each coordinate Zn(2+). The active site involves aspartate 235.

It belongs to the eukaryotic-type primase small subunit family. Heterodimer of a small subunit (PriS) and a large subunit (PriL). Mg(2+) serves as cofactor. Requires Mn(2+) as cofactor.

Catalytic subunit of DNA primase, an RNA polymerase that catalyzes the synthesis of short RNA molecules used as primers for DNA polymerase during DNA replication. The small subunit contains the primase catalytic core and has DNA synthesis activity on its own. Binding to the large subunit stabilizes and modulates the activity, increasing the rate of DNA synthesis while decreasing the length of the DNA fragments, and conferring RNA synthesis capability. The DNA polymerase activity may enable DNA primase to also catalyze primer extension after primer synthesis. May also play a role in DNA repair. Possesses a template-independent 3'-terminal nucleotidyl transferase activity. In Saccharolobus solfataricus (strain ATCC 35092 / DSM 1617 / JCM 11322 / P2) (Sulfolobus solfataricus), this protein is DNA primase small subunit PriS.